Here is a 250-residue protein sequence, read N- to C-terminus: Geranylgeranylglyceryl phosphate synthase (250 aa).

Mg(2+) is bound by residues aspartate 26 and serine 55. Sn-glycerol 1-phosphate is bound by residues 174-180 (YLEAGSG), 205-206 (GG), and 227-228 (GT).

Belongs to the GGGP/HepGP synthase family. Group II subfamily. Requires Mg(2+) as cofactor.

It localises to the cytoplasm. The enzyme catalyses sn-glycerol 1-phosphate + (2E,6E,10E)-geranylgeranyl diphosphate = sn-3-O-(geranylgeranyl)glycerol 1-phosphate + diphosphate. It participates in membrane lipid metabolism; glycerophospholipid metabolism. Prenyltransferase that catalyzes the transfer of the geranylgeranyl moiety of geranylgeranyl diphosphate (GGPP) to the C3 hydroxyl of sn-glycerol-1-phosphate (G1P). This reaction is the first ether-bond-formation step in the biosynthesis of archaeal membrane lipids. In Nitrosopumilus maritimus (strain SCM1), this protein is Geranylgeranylglyceryl phosphate synthase.